We begin with the raw amino-acid sequence, 130 residues long: Interferon alpha-inducible protein 27-like protein 2 (130 aa).

The next 3 helical transmembrane spans lie at 8-28 (AAVG…AMGF), 43-63 (MSAA…VATL), and 66-86 (VGAA…GSVL). Residues 93-130 (SPSSSLPAEPEAKEDEARENVPQGEPPKPPLKSEKHEE) are disordered.

Belongs to the IFI6/IFI27 family.

It localises to the mitochondrion membrane. In terms of biological role, plays a role in the apoptotic process and has a pro-apoptotic activity. The protein is Interferon alpha-inducible protein 27-like protein 2 of Homo sapiens (Human).